The following is a 251-amino-acid chain: Cell division protein ZapD (251 aa).

It belongs to the ZapD family. As to quaternary structure, interacts with FtsZ.

It localises to the cytoplasm. Functionally, cell division factor that enhances FtsZ-ring assembly. Directly interacts with FtsZ and promotes bundling of FtsZ protofilaments, with a reduction in FtsZ GTPase activity. The polypeptide is Cell division protein ZapD (Burkholderia cenocepacia (strain HI2424)).